Reading from the N-terminus, the 1568-residue chain is Plexin-C1 (1568 aa).

The first 34 residues, 1-34, serve as a signal peptide directing secretion; sequence MEVSRRKAPPRPPRPAAPLPLLAYLLALAAPGRG. The Sema domain occupies 35 to 452; the sequence is ADEPVWRSEQ…AGKEVRRIRV (418 aa). The Extracellular segment spans residues 35 to 944; sequence ADEPVWRSEQ…YVEQESVPST (910 aa). The cysteines at positions 64 and 87 are disulfide-linked. N-linked (GlcNAc...) asparagine glycosylation is found at asparagine 86, asparagine 141, and asparagine 149. 3 cysteine pairs are disulfide-bonded: cysteine 156–cysteine 194, cysteine 226–cysteine 354, and cysteine 283–cysteine 329. 2 N-linked (GlcNAc...) asparagine glycosylation sites follow: asparagine 241 and asparagine 252. Asparagine 386 and asparagine 407 each carry an N-linked (GlcNAc...) asparagine glycan. Disulfide bonds link cysteine 455–cysteine 472, cysteine 461–cysteine 506, cysteine 464–cysteine 481, and cysteine 475–cysteine 487. N-linked (GlcNAc...) asparagine glycosylation is found at asparagine 548, asparagine 582, asparagine 653, asparagine 692, asparagine 771, asparagine 796, asparagine 821, asparagine 871, and asparagine 890. Residues 945-965 traverse the membrane as a helical segment; sequence WYFLIVLPVLLVIVIFAAVGV. Over 966-1568 the chain is Cytoplasmic; that stretch reads TRHKSKELSR…FDEKKKCKWM (603 aa). Position 978 is a phosphoserine (serine 978).

It belongs to the plexin family. In terms of assembly, monomer. Homodimer. Interacts with SEMA7A. N-glycosylated. In terms of tissue distribution, detected in heart, brain, lung, spleen and placenta.

Its subcellular location is the membrane. Functionally, receptor for SEMA7A, for smallpox semaphorin A39R, vaccinia virus semaphorin A39R and for herpesvirus Sema protein. Binding of semaphorins triggers cellular responses leading to the rearrangement of the cytoskeleton and to secretion of IL6 and IL8. This chain is Plexin-C1 (PLXNC1), found in Homo sapiens (Human).